The chain runs to 45 residues: Large ribosomal subunit protein bL34 (45 aa).

This sequence belongs to the bacterial ribosomal protein bL34 family.

This is Large ribosomal subunit protein bL34 from Corynebacterium urealyticum (strain ATCC 43042 / DSM 7109).